The following is a 115-amino-acid chain: Splicing factor 3B subunit 6-like protein (115 aa).

The interval 9 to 22 (EVNSILFIKNLSFK) is interaction with pre-mRNA branch site. Residues 12–87 (SILFIKNLSF…RYLVVHYYNP (76 aa)) enclose the RRM domain.

The protein resides in the nucleus. Functionally, necessary for the splicing of pre-mRNA. The protein is Splicing factor 3B subunit 6-like protein of Schizosaccharomyces pombe (strain 972 / ATCC 24843) (Fission yeast).